Consider the following 242-residue polypeptide: Small ribosomal subunit protein uS2 (242 aa).

This sequence belongs to the universal ribosomal protein uS2 family.

In Idiomarina loihiensis (strain ATCC BAA-735 / DSM 15497 / L2-TR), this protein is Small ribosomal subunit protein uS2.